The primary structure comprises 323 residues: Mas-related G-protein coupled receptor member X1 (323 aa).

The Extracellular segment spans residues 1–30 (MDPTISSLSTESTTLNKTGHPSCRPILTLS). N-linked (GlcNAc...) asparagine glycosylation occurs at asparagine 16. The helical transmembrane segment at 31-51 (FLVPIITLLGLAGNTIVLWLL) threads the bilayer. The Cytoplasmic segment spans residues 52–59 (GFRMRRKA). The chain crosses the membrane as a helical span at residues 60-80 (ISVYVLNLSLADSFFLCCHFI). Residues 81–100 (DSLMRIMNFYGIYAHKLSKE) lie on the Extracellular side of the membrane. The helical transmembrane segment at 101–121 (ILGNAAIIPYISGLSILSAIS) threads the bilayer. The Cytoplasmic segment spans residues 122–143 (TERCLSVLWPIWYHCHRPRNMS). Residues 144–164 (AIICVLIWVLSFLMGILDWFF) form a helical membrane-spanning segment. Topologically, residues 165–180 (SGFLGETHHHLWKNVD) are extracellular. The helical transmembrane segment at 181–201 (FIVTAFLIFLFMLLFGSSLAL) threads the bilayer. Topologically, residues 202–226 (LVRILCGSRRKPLSRLYVTISLTVM) are cytoplasmic. A helical transmembrane segment spans residues 227 to 247 (VYLICGLPLGLYLFLLYWFGI). At 248-258 (HLHYPFCHIYQ) the chain is on the extracellular side. The helical transmembrane segment at 259–279 (VTVLLSCVNSSANPIIYFLVG) threads the bilayer. The Cytoplasmic segment spans residues 280-323 (SFRHRKKHRSLKMVLKRALEETPEEDEYTDSHVQKPTEISERRC).

It belongs to the G-protein coupled receptor 1 family. Mas subfamily. Uniquely localized in a subset of small dorsal root and trigeminal sensory neurons. Associated preferentially with IB4 class of small-diameter somatosensory afferents (also known as nociceptors).

It is found in the cell membrane. In terms of biological role, orphan receptor activated by neuropeptides terminating in Arg-Phe or Arg-Phe-amide. Mediates its action by association with G proteins that activate a phosphatidylinositol-calcium second messenger system. Its effect is mediated by G(q) and G(11) proteins. May regulate the function of nociceptive neurons by modulation of pain perception. The chain is Mas-related G-protein coupled receptor member X1 (Mrgprx1) from Rattus norvegicus (Rat).